A 260-amino-acid chain; its full sequence is HTH-type transcriptional activator FapR (260 aa).

The HTH araC/xylS-type domain maps to 154-251 (ERIVTLLFSD…GVTPKKFEIG (98 aa)). 2 consecutive DNA-binding regions (H-T-H motif) follow at residues 171–192 (SDIAEEMHISEISVRKRLEQEC) and 218–241 (IGMIASLVGYTSVSYFIKTFKEYY).

In terms of assembly, homodimer.

Its function is as follows. Positive regulator of the expression of the 987P operon for the fimbrial protein in enterotoxigenic E.coli. The sequence is that of HTH-type transcriptional activator FapR from Escherichia coli.